Reading from the N-terminus, the 75-residue chain is Serine rich endogenous peptide 20 (75 aa).

A signal peptide spans 1-25 (MYKLTLCILTLSFLLLSGLSNTVLA). The short motif at 52–66 (KIGASGSNSGRAPSC) is the SCOOP motif element. The interval 54–75 (GASGSNSGRAPSCNNSCKPNRP) is disordered. The SxS motif essential for MIK2 binding signature appears at 56–58 (SGS). Residues 56-75 (SGSNSGRAPSCNNSCKPNRP) show a composition bias toward polar residues.

It belongs to the serine rich endogenous peptide (SCOOP) phytocytokine family. In terms of assembly, interacts with MIK2 (via extracellular leucine-rich repeat domain); this interaction triggers the formation of complex between MIK2 and the BAK1/SERK3 and SERK4 coreceptors, and subsequent BAK1 activation by phosphorylation. Mostly expressed in roots.

It localises to the cell membrane. It is found in the secreted. The protein localises to the extracellular space. The protein resides in the apoplast. In terms of biological role, brassicaceae-specific phytocytokine (plant endogenous peptide released into the apoplast) perceived by MIK2 in a BAK1/SERK3 and SERK4 coreceptors-dependent manner, that modulates various physiological and antimicrobial processes including growth prevention and reactive oxygen species (ROS) response regulation. Inhibits root growth. This Arabidopsis thaliana (Mouse-ear cress) protein is Serine rich endogenous peptide 20.